Here is a 407-residue protein sequence, read N- to C-terminus: Argininosuccinate synthase (407 aa).

8 to 16 (AYSGGLDTT) provides a ligand contact to ATP. L-citrulline-binding residues include Tyr86 and Ser91. Gly116 contributes to the ATP binding site. Residues Thr118, Asn122, and Asp123 each contribute to the L-aspartate site. Asn122 contributes to the L-citrulline binding site. L-citrulline is bound by residues Arg126, Ser178, Ser187, Glu264, and Tyr276.

The protein belongs to the argininosuccinate synthase family. Type 1 subfamily. In terms of assembly, homotetramer.

Its subcellular location is the cytoplasm. The catalysed reaction is L-citrulline + L-aspartate + ATP = 2-(N(omega)-L-arginino)succinate + AMP + diphosphate + H(+). It participates in amino-acid biosynthesis; L-arginine biosynthesis; L-arginine from L-ornithine and carbamoyl phosphate: step 2/3. The sequence is that of Argininosuccinate synthase from Lachnoclostridium phytofermentans (strain ATCC 700394 / DSM 18823 / ISDg) (Clostridium phytofermentans).